A 536-amino-acid chain; its full sequence is MSKIFKNRLEGLRALNRGVRALAKAVTSTLGPQGSHVVIKKDHSSPYVTKQGASIAKEIILPDAFENTGLKLIKEAALQMEAQVGDGSTTAIVLTDALFASGLKGVAVGLDPLEIKQGIQLAGAMLDEELAKLVVKISESEDIFHIATSSANHDAAIGKILADAIAQIGIEGVLSIKEGRGTETTLQATRHVGLNSGYLSSYFVTHPETMEVIYEDASILLCNQALSCLNQSFIHFLEQTFQTNRKPLIIIAEDFDPELLSILIVNKLKGNLPVCAIKAPGYGQQCKETLEDIAILTGATLVGDLLGISLSESSLDVLGRVEKIIVKRNTTIFSGGKGNQESLEQRIDYLRQAIVQSSSEMDTQDLEKRLARFVGGVAQIYLGSATENEYKERKIRLESALKAVKAAFKEGCLPGGGVALARAASIIKIPNELPIGVMFGCKCMLQSAEEPLRVLATNCGKDPEYVVDTVLKHADPYFGYNCINDSFENLITSGVFDPFSVTKCALKYSISISCLLLTSSFFIVDSSEKMQNPPLF.

ATP is bound by residues 29-32 (TLGP), Lys50, Gly416, and Asp497.

This sequence belongs to the chaperonin (HSP60) family. Forms a cylinder of 14 subunits composed of two heptameric rings stacked back-to-back. Interacts with the co-chaperonin GroES.

It localises to the cytoplasm. It carries out the reaction ATP + H2O + a folded polypeptide = ADP + phosphate + an unfolded polypeptide.. Functionally, together with its co-chaperonin GroES, plays an essential role in assisting protein folding. The GroEL-GroES system forms a nano-cage that allows encapsulation of the non-native substrate proteins and provides a physical environment optimized to promote and accelerate protein folding. In Chlamydia caviae (strain ATCC VR-813 / DSM 19441 / 03DC25 / GPIC) (Chlamydophila caviae), this protein is Chaperonin GroEL 2.